A 396-amino-acid polypeptide reads, in one-letter code: Ribosomal RNA large subunit methyltransferase I (396 aa).

The region spanning 2 to 81 (SVRLVLAKGR…ESIDIAFFTR (80 aa)) is the PUA domain.

It belongs to the methyltransferase superfamily. RlmI family.

The protein localises to the cytoplasm. It catalyses the reaction cytidine(1962) in 23S rRNA + S-adenosyl-L-methionine = 5-methylcytidine(1962) in 23S rRNA + S-adenosyl-L-homocysteine + H(+). Specifically methylates the cytosine at position 1962 (m5C1962) of 23S rRNA. In Escherichia coli O1:K1 / APEC, this protein is Ribosomal RNA large subunit methyltransferase I.